Here is a 714-residue protein sequence, read N- to C-terminus: Pre-mRNA-splicing factor CLF1 (714 aa).

HAT repeat units lie at residues 48-80 (SFQLTKRKEYEQQLNKNRLNFGQWLRYAKWEVK), 83-115 (HDFPRARSIFERALEVNVQHIPFWTHYIQFELS), 117-149 (KNITHARNLLDRAVTTLPRVDKLWFLYVQTEET), 151-182 (KNYQMVRIIFERWLSWNPNPSAWDAYINYEKR), 184-215 (DEYDNAREIYIRYVQIHSSGEIWLKWIDFEMN), 265-305 (KEYE…FEKS), 315-347 (SIMIKRKLKYEEEVNKSPSDYDSWWSYISILQQ), 349-384 (DNNEVTRETFERAIKVIPTDAFKSTVWRRYIYIWVK), 394-430 (GSIENGRNIWNKALKVIPHKRFTFAKIWISFAQFEIR), 435-470 (NGLASARKILGRSIGQSSTVKPKRKLFKFYIELEQK), 472-510 (GEWDRVRKLYEKWLELSLVGENNLSTINSLLTYIDFEKN), and 555-586 (MRYAEARSLYRKLVERVSTPKVWISFALFESS).

It belongs to the crooked-neck family. Associated with the spliceosome.

It is found in the nucleus. Functionally, involved in pre-mRNA splicing and cell cycle progression. Required for the spliceosome assembly and initiation of the DNA replication. This chain is Pre-mRNA-splicing factor CLF1 (CLF1), found in Debaryomyces hansenii (strain ATCC 36239 / CBS 767 / BCRC 21394 / JCM 1990 / NBRC 0083 / IGC 2968) (Yeast).